The following is a 194-amino-acid chain: Protein GrpE (194 aa).

Positions 1–44 (MAEEKQNEELNEQEELNETEAETAEAEQTAAEADAPAEETQTEM) are disordered. Residues 9 to 25 (ELNEQEELNETEAETAE) are compositionally biased toward acidic residues.

The protein belongs to the GrpE family. Homodimer.

Its subcellular location is the cytoplasm. Functionally, participates actively in the response to hyperosmotic and heat shock by preventing the aggregation of stress-denatured proteins, in association with DnaK and GrpE. It is the nucleotide exchange factor for DnaK and may function as a thermosensor. Unfolded proteins bind initially to DnaJ; upon interaction with the DnaJ-bound protein, DnaK hydrolyzes its bound ATP, resulting in the formation of a stable complex. GrpE releases ADP from DnaK; ATP binding to DnaK triggers the release of the substrate protein, thus completing the reaction cycle. Several rounds of ATP-dependent interactions between DnaJ, DnaK and GrpE are required for fully efficient folding. This is Protein GrpE from Bacillus licheniformis (strain ATCC 14580 / DSM 13 / JCM 2505 / CCUG 7422 / NBRC 12200 / NCIMB 9375 / NCTC 10341 / NRRL NRS-1264 / Gibson 46).